The following is an 89-amino-acid chain: Small ribosomal subunit protein uS15 (89 aa).

It belongs to the universal ribosomal protein uS15 family. Part of the 30S ribosomal subunit. Forms a bridge to the 50S subunit in the 70S ribosome, contacting the 23S rRNA.

In terms of biological role, one of the primary rRNA binding proteins, it binds directly to 16S rRNA where it helps nucleate assembly of the platform of the 30S subunit by binding and bridging several RNA helices of the 16S rRNA. Its function is as follows. Forms an intersubunit bridge (bridge B4) with the 23S rRNA of the 50S subunit in the ribosome. This chain is Small ribosomal subunit protein uS15, found in Blochmanniella pennsylvanica (strain BPEN).